A 286-amino-acid chain; its full sequence is MANAKEIKTKIASVKNTQKITSAMEMVAASKMRKAQDRMAASRPYAENMRKVIGHVAQGSLEYKHPYLEVREAKRVGYIVVSTDRGLCGGLNVNLFKKVVADVKSQREQGVEVEFCPIGARSVQFFNSFGGQVSAYASGLGDAPKLADLIGTVRVMLQAYNEGKLDRLYVVFNRFVNTMSQTPVIEQLLPLPKSEVDEVSHHWDYLYEPDPKELLETLLVRYVESQVYQGVVENLASEQAARMVAMKSATDNAGDLISDLQLVYNKARQAAITQELSEIVAGAAAV.

It belongs to the ATPase gamma chain family. In terms of assembly, F-type ATPases have 2 components, CF(1) - the catalytic core - and CF(0) - the membrane proton channel. CF(1) has five subunits: alpha(3), beta(3), gamma(1), delta(1), epsilon(1). CF(0) has three main subunits: a, b and c.

The protein resides in the cell inner membrane. In terms of biological role, produces ATP from ADP in the presence of a proton gradient across the membrane. The gamma chain is believed to be important in regulating ATPase activity and the flow of protons through the CF(0) complex. In Shewanella sediminis (strain HAW-EB3), this protein is ATP synthase gamma chain.